The sequence spans 525 residues: Lysine--tRNA ligase (525 aa).

Residues 40 to 48 (ASGIPHMGS) carry the 'HIGH' region motif. A 'KMSKS' region motif is present at residues 295–299 (KISKS). ATP is bound at residue Lys-298.

It belongs to the class-I aminoacyl-tRNA synthetase family.

Its subcellular location is the cytoplasm. The catalysed reaction is tRNA(Lys) + L-lysine + ATP = L-lysyl-tRNA(Lys) + AMP + diphosphate. The protein is Lysine--tRNA ligase (lysS) of Cenarchaeum symbiosum (strain A).